Consider the following 1404-residue polypeptide: DNA-directed RNA polymerase subunit beta' (1404 aa).

The Zn(2+) site is built by Cys72, Cys74, Cys87, and Cys90. Mg(2+)-binding residues include Asp462, Asp464, and Asp466. Residues Cys816, Cys890, Cys897, and Cys900 each coordinate Zn(2+).

The protein belongs to the RNA polymerase beta' chain family. In terms of assembly, the RNAP catalytic core consists of 2 alpha, 1 beta, 1 beta' and 1 omega subunit. When a sigma factor is associated with the core the holoenzyme is formed, which can initiate transcription. Mg(2+) serves as cofactor. Requires Zn(2+) as cofactor.

It carries out the reaction RNA(n) + a ribonucleoside 5'-triphosphate = RNA(n+1) + diphosphate. Functionally, DNA-dependent RNA polymerase catalyzes the transcription of DNA into RNA using the four ribonucleoside triphosphates as substrates. The sequence is that of DNA-directed RNA polymerase subunit beta' from Azoarcus sp. (strain BH72).